Here is a 507-residue protein sequence, read N- to C-terminus: Phosphoenolpyruvate carboxylase (507 aa).

A disordered region spans residues 1–25 (MHKIDRKIPNIMGTQHPDNAGVPFF).

It belongs to the PEPCase type 2 family. In terms of assembly, homotetramer. Mg(2+) serves as cofactor.

It carries out the reaction oxaloacetate + phosphate = phosphoenolpyruvate + hydrogencarbonate. Functionally, catalyzes the irreversible beta-carboxylation of phosphoenolpyruvate (PEP) to form oxaloacetate (OAA), a four-carbon dicarboxylic acid source for the tricarboxylic acid cycle. The sequence is that of Phosphoenolpyruvate carboxylase from Oenococcus oeni (strain ATCC BAA-331 / PSU-1).